The chain runs to 514 residues: CENP-B homolog protein 1 (514 aa).

Residues 69–144 (DIKKIRAPKF…RRRHYIQQSA (76 aa)) form the HTH CENPB-type domain.

It is found in the nucleus. The protein resides in the chromosome. Its subcellular location is the centromere. In terms of biological role, binds to centromeric K-type repeat DNA and ARS3002 DNA. The CBH-binding consensus sequence is Py-Pu-A-T-A-T-Py-Pu-T-A. This is CENP-B homolog protein 1 (cbh1) from Schizosaccharomyces pombe (strain 972 / ATCC 24843) (Fission yeast).